The sequence spans 290 residues: Glutamyl-Q tRNA(Asp) synthetase (290 aa).

Residues 9-13 (RFAPS) and Glu-45 contribute to the L-glutamate site. Positions 12 to 22 (PSPSGSLHFGS) match the 'HIGH' region motif. Cys-101, Cys-103, Tyr-115, and Cys-119 together coordinate Zn(2+). Residues Tyr-170 and Arg-188 each coordinate L-glutamate. A 'KMSKS' region motif is present at residues 226-230 (KLSKQ). Residue Lys-229 participates in ATP binding.

The protein belongs to the class-I aminoacyl-tRNA synthetase family. GluQ subfamily. Requires Zn(2+) as cofactor.

Its function is as follows. Catalyzes the tRNA-independent activation of glutamate in presence of ATP and the subsequent transfer of glutamate onto a tRNA(Asp). Glutamate is transferred on the 2-amino-5-(4,5-dihydroxy-2-cyclopenten-1-yl) moiety of the queuosine in the wobble position of the QUC anticodon. In Shewanella amazonensis (strain ATCC BAA-1098 / SB2B), this protein is Glutamyl-Q tRNA(Asp) synthetase.